The sequence spans 851 residues: Nucleolar RNA helicase 2 (851 aa).

Residues 1 to 260 form a disordered region; it reads MPGKLRSGAK…IPVEQKEGAF (260 aa). Phosphoserine is present on residues Ser7 and Ser13. Basic and acidic residues-rich tracts occupy residues 26-42 and 99-113; these read PSEK…KTEE and EPLE…KEII. Lys39 carries the post-translational modification N6-acetyllysine. Tandem repeats lie at residues 117–153, 154–190, and 191–227. The interval 117-227 is 3 X 37 AA tandem repeats; sequence PSEEEADMPK…SPRLKDGLSQ (111 aa). Residue Ser118 is modified to Phosphoserine. A compositionally biased stretch (basic and acidic residues) spans 133–145; that stretch reads GKEANGDAGEKSP. An N6-acetyllysine modification is found at Lys134. Phosphoserine occurs at positions 144, 155, 181, 192, 218, 236, 243, 244, and 245. The span at 170–182 shows a compositional bias: basic and acidic residues; sequence GKEANGDAGEKSP. Residues 207-223 are compositionally biased toward basic and acidic residues; it reads GKEASGDAGEKSPRLKD. Polar residues predominate over residues 226–237; the sequence is SQPSEPKSNSSD. A compositionally biased stretch (basic and acidic residues) spans 246–257; the sequence is ETEKEIPVEQKE. The short motif at 258 to 286 is the Q motif element; that stretch reads GAFSNFPISEETVKLLKARGVNFLFPIQA. A Helicase ATP-binding domain is found at 289–468; the sequence is FHHVYSGKDL…KKYMKSTYEQ (180 aa). 302 to 309 contributes to the ATP binding site; that stretch reads ARTGTGKT. Thr368 carries the post-translational modification Phosphothreonine. The DEAD box motif lies at 411–414; it reads DEVD. One can recognise a Helicase C-terminal domain in the interval 501–645; the sequence is DVIRVYSGHQ…GVPSATEIIK (145 aa). Ser639 carries the post-translational modification Phosphoserine. An N6-acetyllysine modification is found at Lys672. Residues 783–851 are disordered; the sequence is QPELEGPPDG…KRSFSKAFGQ (69 aa). 3 consecutive repeat copies span residues 807–811, 817–823, and 829–833. Residues 807 to 833 are 3 X 5 AA repeats; the sequence is FRGQRGGSRNFRGQGQRGGSRNFRGQR. Lys847 is modified (N6-acetyllysine).

This sequence belongs to the DEAD box helicase family. DDX21/DDX50 subfamily. In terms of assembly, homodimer; homodimerizes via its N-terminus. Found in a multi-helicase-TICAM1 complex at least composed of DHX36, DDX1, DDX21 and TICAM1; this complex exists in resting cells with or without poly(I:C) RNA ligand stimulation. Interacts (via C-terminus) with TICAM1 (via TIR domain). Interacts with DHX36 (via C-terminus); this interaction serves as bridges to TICAM1. Interacts (via C-terminus) with DDX1 (via B30.2/SPRY domain); this interaction serves as bridges to TICAM1. Component of the B-WICH complex, at least composed of SMARCA5/SNF2H, BAZ1B/WSTF, SF3B1, DEK, MYO1C, ERCC6, MYBBP1A and DDX21. Interacts with C1QBP. Interacts with JUN. Interacts with WDR46. Interacts with MCM3AP. Interacts with WDR43. Interacts with KPNA3. Interacts with GID4. In terms of processing, acetylation by CREBBP/CBP inhibits the helicase activity. Deacetylation by SIRT7 promotes the helicase activity and overcomes R-loop-mediated stalling of RNA polymerases. In terms of tissue distribution, highly expressed in liver and testis. Expressed at lower level in brain, lungs, and skeletal muscle.

The protein localises to the nucleus. It localises to the nucleolus. It is found in the nucleoplasm. Its subcellular location is the cytoplasm. The protein resides in the cytosol. The protein localises to the mitochondrion. The catalysed reaction is ATP + H2O = ADP + phosphate + H(+). With respect to regulation, acetylation inhibits the helicase activity. RNA helicase that acts as a sensor of the transcriptional status of both RNA polymerase (Pol) I and II: promotes ribosomal RNA (rRNA) processing and transcription from polymerase II (Pol II). Binds various RNAs, such as rRNAs, snoRNAs, 7SK and, at lower extent, mRNAs. In the nucleolus, localizes to rDNA locus, where it directly binds rRNAs and snoRNAs, and promotes rRNA transcription, processing and modification. Required for rRNA 2'-O-methylation, possibly by promoting the recruitment of late-acting snoRNAs SNORD56 and SNORD58 with pre-ribosomal complexes. In the nucleoplasm, binds 7SK RNA and is recruited to the promoters of Pol II-transcribed genes: acts by facilitating the release of P-TEFb from inhibitory 7SK snRNP in a manner that is dependent on its helicase activity, thereby promoting transcription of its target genes. Functions as cofactor for JUN-activated transcription: required for phosphorylation of JUN at 'Ser-77'. Can unwind double-stranded RNA (helicase) and can fold or introduce a secondary structure to a single-stranded RNA (foldase). Together with SIRT7, required to prevent R-loop-associated DNA damage and transcription-associated genomic instability: deacetylation by SIRT7 activates the helicase activity, thereby overcoming R-loop-mediated stalling of RNA polymerases. Involved in rRNA processing. May bind to specific miRNA hairpins. Component of a multi-helicase-TICAM1 complex that acts as a cytoplasmic sensor of viral double-stranded RNA (dsRNA) and plays a role in the activation of a cascade of antiviral responses including the induction of pro-inflammatory cytokines via the adapter molecule TICAM1. In Mus musculus (Mouse), this protein is Nucleolar RNA helicase 2 (Ddx21).